The sequence spans 380 residues: NADPH oxidoreductase (380 aa).

The FAD-binding FR-type domain occupies A58 to P164. One can recognise a 2Fe-2S ferredoxin-type domain in the interval G299–I380. Residues C333, C338, C341, and C368 each coordinate [2Fe-2S] cluster.

Interacts with DesA3 to form a functional acyl-CoA desaturase complex. [2Fe-2S] cluster serves as cofactor. The cofactor is FAD.

It is found in the cell membrane. It participates in lipid metabolism; fatty acid metabolism. In terms of biological role, is likely involved in the aerobic desaturation system responsible for the synthesis of oleic acid from stearoyl-CoA; oleic acid is a precursor of mycobacterial membrane phospholipids and triglycerides. Is the electron transfer partner for the stearoyl-CoA 9-desaturase DesA3. Catalyzes electron transfer reaction between NADPH and the diiron center of DesA3. Cannot use NADH. The chain is NADPH oxidoreductase from Mycobacterium tuberculosis (strain ATCC 25618 / H37Rv).